We begin with the raw amino-acid sequence, 407 residues long: Cytochrome P450 NovI (407 aa).

Cys-357 contributes to the heme binding site.

It belongs to the cytochrome P450 family. Heme is required as a cofactor.

Its pathway is antibiotic biosynthesis; novobiocin biosynthesis. Its function is as follows. Together with NovH, involved in the formation of a beta-OH-Tyr intermediate in the novobiocin biosynthesis pathway, an aminocoumarin family antibiotic that targets bacterial DNA gyrases. Acts as a cytochrome P450-type monooxygenase with specificity for the tyrosyl-S-NovH acyl enzyme (L-Tyr-S-NovH) to form the beta-OH-Tyr intermediate (L-beta-OH-Tyr-S-NovH). This chain is Cytochrome P450 NovI (novI), found in Streptomyces niveus (Streptomyces spheroides).